Consider the following 155-residue polypeptide: Transcriptional repressor NrdR (155 aa).

Residues 3 to 34 (CPYCQNADTRVVDSRLIGEGEQVRRRRQCPSC) fold into a zinc finger. One can recognise an ATP-cone domain in the interval 49–139 (PRVVKSDGRR…VYRRFEDVGA (91 aa)).

This sequence belongs to the NrdR family. Requires Zn(2+) as cofactor.

Functionally, negatively regulates transcription of bacterial ribonucleotide reductase nrd genes and operons by binding to NrdR-boxes. The sequence is that of Transcriptional repressor NrdR from Halorhodospira halophila (strain DSM 244 / SL1) (Ectothiorhodospira halophila (strain DSM 244 / SL1)).